A 213-amino-acid polypeptide reads, in one-letter code: Na(+)-translocating NADH-quinone reductase subunit D (213 aa).

7 helical membrane passes run 21–41, 42–62, 77–97, 101–121, 131–151, 153–173, and 183–203; these read ILIA…VQTA, ITMG…VSLL, IIIS…FFDI, LSVF…SESL, FLDG…IGVI, ELFG…VYAS, and LSLM…IWLV.

This sequence belongs to the NqrDE/RnfAE family. In terms of assembly, composed of six subunits; NqrA, NqrB, NqrC, NqrD, NqrE and NqrF.

Its subcellular location is the cell inner membrane. The catalysed reaction is a ubiquinone + n Na(+)(in) + NADH + H(+) = a ubiquinol + n Na(+)(out) + NAD(+). Functionally, NQR complex catalyzes the reduction of ubiquinone-1 to ubiquinol by two successive reactions, coupled with the transport of Na(+) ions from the cytoplasm to the periplasm. NqrA to NqrE are probably involved in the second step, the conversion of ubisemiquinone to ubiquinol. The sequence is that of Na(+)-translocating NADH-quinone reductase subunit D from Chlamydia pneumoniae (Chlamydophila pneumoniae).